Reading from the N-terminus, the 289-residue chain is ADP-dependent (S)-NAD(P)H-hydrate dehydratase (289 aa).

Residues valine 9–leucine 286 enclose the YjeF C-terminal domain. 2 residues coordinate (6S)-NADPHX: alanine 44 and histidine 160. Residues lysine 197–serine 201 and glycine 226 each bind AMP. Aspartate 227 contributes to the (6S)-NADPHX binding site.

This sequence belongs to the NnrD/CARKD family. In terms of assembly, homotetramer. It depends on Mg(2+) as a cofactor.

The enzyme catalyses (6S)-NADHX + ADP = AMP + phosphate + NADH + H(+). It carries out the reaction (6S)-NADPHX + ADP = AMP + phosphate + NADPH + H(+). In terms of biological role, catalyzes the dehydration of the S-form of NAD(P)HX at the expense of ADP, which is converted to AMP. Together with NAD(P)HX epimerase, which catalyzes the epimerization of the S- and R-forms, the enzyme allows the repair of both epimers of NAD(P)HX, a damaged form of NAD(P)H that is a result of enzymatic or heat-dependent hydration. The sequence is that of ADP-dependent (S)-NAD(P)H-hydrate dehydratase from Xanthomonas campestris pv. campestris (strain ATCC 33913 / DSM 3586 / NCPPB 528 / LMG 568 / P 25).